Consider the following 422-residue polypeptide: MANFIDRRLNAKGKSTVNRQRFINRYKQQIKKAVSDAVTRRSVTDVDKGEKISIPTRDISEPMFHQGKGGVRDRVHPGNDQFTRGDKIDRPQGGSGGGAGKGDASDSGEGNDDFVFEISKDEYLELLFEDLELPNLQKNRLNKLVEYQIYRAGFTNDGVPANINIVRSLRSSLARRIAMSASKKKLLKESEQELAELENIPGTKAELILDLKAQIEELKRKIAKVPFIDTFDLRFNNFSRREVPSSQAVMFCLMDVSGSMDQATKDMAKRFYILLYLFLTRTYKNLEVVYIRHHTQAKEVDEHEFFYSQETGGTIVSSALKLMHEIQQARYPADEWNIYAAQASDGDNWADDSPTCKQLLEQKILPLVRYFSYIEITNRAHQTLWREYESLQQHYDNIAVQHIRQAEDIYPVFRELFKKQAV.

The tract at residues 60–111 is disordered; the sequence is SEPMFHQGKGGVRDRVHPGNDQFTRGDKIDRPQGGSGGGAGKGDASDSGEGN. Over residues 70–90 the composition is skewed to basic and acidic residues; that stretch reads GVRDRVHPGNDQFTRGDKIDR.

It belongs to the UPF0229 family.

In Shewanella oneidensis (strain ATCC 700550 / JCM 31522 / CIP 106686 / LMG 19005 / NCIMB 14063 / MR-1), this protein is UPF0229 protein SO_2883.